Reading from the N-terminus, the 100-residue chain is Cell division protein FtsB (100 aa).

Residues 1–3 (MKW) lie on the Cytoplasmic side of the membrane. A helical membrane pass occupies residues 4 to 21 (LAIILVVALLALQYRLWM). The Periplasmic segment spans residues 22–100 (GEGSIASVVS…TDKDTKKNKK (79 aa)). The stretch at 26–73 (IASVVSLNREIAKQKEENARLRERNRLLAAEVDALKQGKDAIEERARN) forms a coiled coil.

Belongs to the FtsB family. In terms of assembly, part of a complex composed of FtsB, FtsL and FtsQ.

It localises to the cell inner membrane. In terms of biological role, essential cell division protein. May link together the upstream cell division proteins, which are predominantly cytoplasmic, with the downstream cell division proteins, which are predominantly periplasmic. The polypeptide is Cell division protein FtsB (Saccharophagus degradans (strain 2-40 / ATCC 43961 / DSM 17024)).